We begin with the raw amino-acid sequence, 208 residues long: Adapter protein MecA (208 aa).

This sequence belongs to the MecA family. Homodimer.

In terms of biological role, enables the recognition and targeting of unfolded and aggregated proteins to the ClpC protease or to other proteins involved in proteolysis. This Exiguobacterium sibiricum (strain DSM 17290 / CCUG 55495 / CIP 109462 / JCM 13490 / 255-15) protein is Adapter protein MecA.